We begin with the raw amino-acid sequence, 613 residues long: Probable LRR receptor-like serine/threonine-protein kinase At5g10290 (613 aa).

The N-terminal stretch at 1–31 is a signal peptide; the sequence is MRMFSLQKMAMAFTLLFFACLCSFVSPDAQG. Residues 32–225 lie on the Extracellular side of the membrane; it reads DALFALRISL…SGDSSKPKTG (194 aa). N-linked (GlcNAc...) asparagine glycosylation is found at asparagine 81 and asparagine 116. LRR repeat units follow at residues 95–117, 119–141, 143–166, and 167–189; these read NLKTLTLKGNGITGEIPEDFGNL, SLTSLDLEDNQLTGRIPSTIGNL, KLQFLTLSRNKLNGTIPESLTGLP, and NLLNLLLDSNSLSGQIPQSLFEI. The N-linked (GlcNAc...) asparagine glycan is linked to asparagine 155. N-linked (GlcNAc...) asparagine glycosylation occurs at asparagine 193. Residues 226-246 traverse the membrane as a helical segment; it reads IIAGVVAGVTVVLFGILLFLF. Residues 247-613 lie on the Cytoplasmic side of the membrane; that stretch reads CKDRHKGYRR…QDAIELSGGR (367 aa). Threonine 287 carries the post-translational modification Phosphothreonine. The region spanning 290–569 is the Protein kinase domain; sequence FSEKNVLGQG…VVRMLEGEGL (280 aa). ATP is bound at residue 296 to 304; that stretch reads LGQGGFGKV. Threonine 313 carries the phosphothreonine modification. Lysine 318 lines the ATP pocket. A Phosphoserine modification is found at serine 371. Threonine 390 bears the Phosphothreonine mark. The Proton acceptor role is filled by aspartate 417. Phosphothreonine is present on residues threonine 450, threonine 451, and threonine 456. Residue tyrosine 464 is modified to Phosphotyrosine. The residue at position 466 (serine 466) is a Phosphoserine. Threonine 467 is modified (phosphothreonine). The residue at position 471 (serine 471) is a Phosphoserine. At threonine 547 the chain carries Phosphothreonine.

The protein belongs to the protein kinase superfamily. Ser/Thr protein kinase family.

The protein resides in the cell membrane. The catalysed reaction is L-seryl-[protein] + ATP = O-phospho-L-seryl-[protein] + ADP + H(+). It carries out the reaction L-threonyl-[protein] + ATP = O-phospho-L-threonyl-[protein] + ADP + H(+). The chain is Probable LRR receptor-like serine/threonine-protein kinase At5g10290 from Arabidopsis thaliana (Mouse-ear cress).